The following is a 181-amino-acid chain: SecB-like chaperone Rv1957 (181 aa).

Threonine 2 bears the N-acetylthreonine mark.

It belongs to the SecB-like family. In terms of assembly, homotetramer, interacts with antitoxin HigA1.

Chaperone component of an atypical, type II toxin-antitoxin chaperone (TAC) system. Prevents antitoxin HigA1 aggregation in vitro at a 1:3 chaperone:antitoxin ratio, probably also protects antitoxin HigA1 from protease. Required for neutralization of toxin HigB1 upon ectopic expression in Mycobacterium marinum or E.coli. When expressed in E.coli complements a secB deletion, restores export of OmpA and MBP and inhibits aggregation of proOmpC although it is less efficient than endogenous SecB. Complements the general chaperone function of E.coli SecB less well. The polypeptide is SecB-like chaperone Rv1957 (secBL) (Mycobacterium tuberculosis (strain ATCC 25618 / H37Rv)).